A 278-amino-acid chain; its full sequence is Pantothenate synthetase (278 aa).

27–34 provides a ligand contact to ATP; sequence MGYLHEGH. Residue His-34 is the Proton donor of the active site. (R)-pantoate is bound at residue Gln-58. Gln-58 is a beta-alanine binding site. Residue 144-147 participates in ATP binding; that stretch reads GQKD. Gln-150 provides a ligand contact to (R)-pantoate. ATP is bound by residues Val-173 and 181-184; that span reads MSSR.

It belongs to the pantothenate synthetase family. As to quaternary structure, homodimer.

Its subcellular location is the cytoplasm. The catalysed reaction is (R)-pantoate + beta-alanine + ATP = (R)-pantothenate + AMP + diphosphate + H(+). Its pathway is cofactor biosynthesis; (R)-pantothenate biosynthesis; (R)-pantothenate from (R)-pantoate and beta-alanine: step 1/1. In terms of biological role, catalyzes the condensation of pantoate with beta-alanine in an ATP-dependent reaction via a pantoyl-adenylate intermediate. The sequence is that of Pantothenate synthetase from Roseiflexus castenholzii (strain DSM 13941 / HLO8).